Consider the following 262-residue polypeptide: MNPVAFSIGSFEVRWYGIIIALGILIAMTLVSINAKKKNLNFDVILDLFLWCFPFAIIGARAYYVLFELENYHSFWDMINIRQGGLAIHGGIIGAFLTAFIYCKVKKVDFLAYADIVAPAFILAQGIGRWGNFFNQEAHGGQVTSEFISKFPEFIQRGMYINGAYYHPTFLYESIWDIFVAILLMIILYNITDRYKGVVISAYISLYSLGRFFIEGLRTDSLYFMNIRVAQLVSLLGIIIGIVAIIIIVSRGKKKRKGIFIN.

The next 4 membrane-spanning stretches (helical) occupy residues 15 to 35 (WYGI…SINA), 40 to 60 (LNFD…IIGA), 83 to 103 (QGGL…FIYC), and 108 to 128 (VDFL…QGIG). R129 is an a 1,2-diacyl-sn-glycero-3-phospho-(1'-sn-glycerol) binding site. Transmembrane regions (helical) follow at residues 169-189 (TFLY…IILY), 197-217 (GVVI…IEGL), and 229-249 (VAQL…IIIV).

This sequence belongs to the Lgt family.

Its subcellular location is the cell membrane. The enzyme catalyses L-cysteinyl-[prolipoprotein] + a 1,2-diacyl-sn-glycero-3-phospho-(1'-sn-glycerol) = an S-1,2-diacyl-sn-glyceryl-L-cysteinyl-[prolipoprotein] + sn-glycerol 1-phosphate + H(+). It functions in the pathway protein modification; lipoprotein biosynthesis (diacylglyceryl transfer). Catalyzes the transfer of the diacylglyceryl group from phosphatidylglycerol to the sulfhydryl group of the N-terminal cysteine of a prolipoprotein, the first step in the formation of mature lipoproteins. In Clostridium perfringens (strain 13 / Type A), this protein is Phosphatidylglycerol--prolipoprotein diacylglyceryl transferase 1.